We begin with the raw amino-acid sequence, 145 residues long: Small ribosomal subunit protein uS15 (145 aa).

The protein belongs to the universal ribosomal protein uS15 family. Part of the 30S ribosomal subunit.

This is Small ribosomal subunit protein uS15 from Thermoplasma acidophilum (strain ATCC 25905 / DSM 1728 / JCM 9062 / NBRC 15155 / AMRC-C165).